The following is a 572-amino-acid chain: Phosphoenolpyruvate-protein phosphotransferase (572 aa).

The active-site Tele-phosphohistidine intermediate is the His191. Residues Arg298 and Arg334 each coordinate phosphoenolpyruvate. 2 residues coordinate Mg(2+): Glu433 and Asp457. Phosphoenolpyruvate-binding positions include Asn456–Asp457 and Arg467. The active-site Proton donor is Cys504.

This sequence belongs to the PEP-utilizing enzyme family. In terms of assembly, homodimer. Requires Mg(2+) as cofactor.

The protein localises to the cytoplasm. It carries out the reaction L-histidyl-[protein] + phosphoenolpyruvate = N(pros)-phospho-L-histidyl-[protein] + pyruvate. Functionally, general (non sugar-specific) component of the phosphoenolpyruvate-dependent sugar phosphotransferase system (sugar PTS). This major carbohydrate active-transport system catalyzes the phosphorylation of incoming sugar substrates concomitantly with their translocation across the cell membrane. Enzyme I transfers the phosphoryl group from phosphoenolpyruvate (PEP) to the phosphoryl carrier protein (HPr). The chain is Phosphoenolpyruvate-protein phosphotransferase (ptsI) from Staphylococcus epidermidis (strain ATCC 35984 / DSM 28319 / BCRC 17069 / CCUG 31568 / BM 3577 / RP62A).